Consider the following 410-residue polypeptide: Gamma-glutamyl phosphate reductase (410 aa).

It belongs to the gamma-glutamyl phosphate reductase family.

The protein localises to the cytoplasm. It catalyses the reaction L-glutamate 5-semialdehyde + phosphate + NADP(+) = L-glutamyl 5-phosphate + NADPH + H(+). The protein operates within amino-acid biosynthesis; L-proline biosynthesis; L-glutamate 5-semialdehyde from L-glutamate: step 2/2. Catalyzes the NADPH-dependent reduction of L-glutamate 5-phosphate into L-glutamate 5-semialdehyde and phosphate. The product spontaneously undergoes cyclization to form 1-pyrroline-5-carboxylate. This is Gamma-glutamyl phosphate reductase from Sulfurimonas denitrificans (strain ATCC 33889 / DSM 1251) (Thiomicrospira denitrificans (strain ATCC 33889 / DSM 1251)).